Consider the following 429-residue polypeptide: Trigger factor (429 aa).

One can recognise a PPIase FKBP-type domain in the interval 161-246 (GDRLSIDFKG…INEIASPKEL (86 aa)).

This sequence belongs to the FKBP-type PPIase family. Tig subfamily.

The protein localises to the cytoplasm. It catalyses the reaction [protein]-peptidylproline (omega=180) = [protein]-peptidylproline (omega=0). Functionally, involved in protein export. Acts as a chaperone by maintaining the newly synthesized protein in an open conformation. Functions as a peptidyl-prolyl cis-trans isomerase. In Vesicomyosocius okutanii subsp. Calyptogena okutanii (strain HA), this protein is Trigger factor.